The primary structure comprises 41 residues: Trypsin inhibitor 2c (41 aa).

2 cysteine pairs are disulfide-bonded: Cys-11/Cys-32 and Cys-15/Cys-28.

Inhibits bovine trypsin with a Ki of 0.174 nM and trypsin-like proteases from G.mellonella larvae. Has no activity against serine proteases chymotrypsin, subtilisin and elastase. Has no activity against cysteine proteases from beetle gut. This Fagopyrum esculentum (Common buckwheat) protein is Trypsin inhibitor 2c.